We begin with the raw amino-acid sequence, 87 residues long: Potassium channel toxin Tdi-beta-KTx (87 aa).

A signal peptide spans 1–19 (MERKLALLLLLGMITLASS). Positions 20–27 (GLREKHVQ) are excised as a propeptide. The BetaSPN-type CS-alpha/beta domain maps to 53-87 (QFGCPAYEGYCMNHCQDIERHDGSCHGFKCKCEKS). 3 cysteine pairs are disulfide-bonded: C56/C77, C63/C82, and C67/C84.

As to expression, expressed by the venom gland.

The protein localises to the secreted. In terms of biological role, inhibits voltage-gated potassium channel. The chain is Potassium channel toxin Tdi-beta-KTx from Tityus discrepans (Venezuelan scorpion).